The chain runs to 124 residues: MAITKDDILEAVGAMSVMELNDLVKAFEEKFGVSAAAMAVAAAPGAGGAAAAEEQTEFNVILAEVGANKVGVIKAVREITGLGLKEAKDLVDGAPKPVKEGVDKAAAAEAKKKLEDAGAKVDVK.

This sequence belongs to the bacterial ribosomal protein bL12 family. Homodimer. Part of the ribosomal stalk of the 50S ribosomal subunit. Forms a multimeric L10(L12)X complex, where L10 forms an elongated spine to which 2 to 4 L12 dimers bind in a sequential fashion. Binds GTP-bound translation factors.

Functionally, forms part of the ribosomal stalk which helps the ribosome interact with GTP-bound translation factors. Is thus essential for accurate translation. The polypeptide is Large ribosomal subunit protein bL12 (Cupriavidus necator (strain ATCC 17699 / DSM 428 / KCTC 22496 / NCIMB 10442 / H16 / Stanier 337) (Ralstonia eutropha)).